The following is a 145-amino-acid chain: Basic leucine zipper 1 (145 aa).

A compositionally biased stretch (polar residues) spans 1 to 11 (MANAEKTSSGS). The interval 1–39 (MANAEKTSSGSDIDEKKRKRKLSNRESARRSRLKKQKLM) is disordered. In terms of domain architecture, bZIP spans 14–77 (DEKKRKRKLS…DSVETENAGL (64 aa)). The interval 16-37 (KKRKRKLSNRESARRSRLKKQK) is basic motif. Positions 46–53 (ISSLERRI) are leucine-zipper.

The protein belongs to the bZIP family. In terms of assembly, interacts with ZFP7, BZIP4, BZIP9, BZIP10, BZIP11, BZIP25, BZIP42, BZIP44, BZIP53, BZIP58 and BZIP63. Expressed in both shoots, including young leaves, stipulae and trichomes (except in cotyledons and hypocotyl), and roots, including vascular tissues (e.g. in both the phloem and the xylem). Present in seeds and pollen. Restricted to vasculatures and roots in the presence of sucrose or glucose.

Its subcellular location is the nucleus. Transcription factor that binds to the C-box-like motif (5'-TGCTGACGTCA-3') and G-box-like motif (5'-CCACGTGGCC-3'), ABRE elements, of gene promoters involved in sugar signaling. Activated by low energy stress both at transcriptional and post-transcriptional mechanisms. Promotes dark-induced senescence and participates in the transcriptional reprogramming of amino acid metabolism during the dark-induced starvation response. Transcription activator of the mannan synthase CSLA9. Recognizes and binds to DNA-specific sequence of CSLA9 promoter. This Arabidopsis thaliana (Mouse-ear cress) protein is Basic leucine zipper 1 (BZIP1).